Here is a 179-residue protein sequence, read N- to C-terminus: Embryo-specific protein ATS3A (179 aa).

The first 22 residues, 1 to 22 (MLRLAIPLFLFALCSFTLFSSA), serve as a signal peptide directing secretion. In terms of domain architecture, PLAT spans 48–158 (CSYTVIIKTS…NSVWYGFNVC (111 aa)).

As to quaternary structure, interacts with EULS3 (via N-terminus). Expressed in roots, rosette leaves, stems, cauline leaves and flowers.

The protein resides in the secreted. Its function is as follows. May play a role during embryo development. The protein is Embryo-specific protein ATS3A of Arabidopsis thaliana (Mouse-ear cress).